We begin with the raw amino-acid sequence, 346 residues long: 4-hydroxy-2-oxohexanoate aldolase (346 aa).

The Pyruvate carboxyltransferase domain occupies 7–259 (VRITDTSLRD…KTGIDFFDIA (253 aa)). 15-16 (RD) is a substrate binding site. Aspartate 16 is a Mn(2+) binding site. Catalysis depends on histidine 19, which acts as the Proton acceptor. 2 residues coordinate substrate: serine 169 and histidine 198. Residues histidine 198 and histidine 200 each contribute to the Mn(2+) site. Tyrosine 289 is a binding site for substrate.

It belongs to the 4-hydroxy-2-oxovalerate aldolase family. As to quaternary structure, homodimer. Forms a heterotetramer composed of two aldolase (HsaF) and two dehydrogenase (HsaG) subunits. Requires Mn(2+) as cofactor.

The enzyme catalyses (S)-4-hydroxy-2-oxohexanoate = propanal + pyruvate. It carries out the reaction (S)-4-hydroxy-2-oxopentanoate = acetaldehyde + pyruvate. Involved in cholesterol degradation. Catalyzes the retro-aldol cleavage of 4-hydroxy-2-oxohexanoate (HOHA) to pyruvate and propanal. Can also catalyze the cleavage of 4-hydroxy-2-oxopentanoate (HOPA) to pyruvate and acetaldehyde. The aldehydes produced by this reaction are directly channeled to the dehydrogenase HsaG. The polypeptide is 4-hydroxy-2-oxohexanoate aldolase (Mycobacterium bovis (strain ATCC BAA-935 / AF2122/97)).